Here is a 424-residue protein sequence, read N- to C-terminus: Satellite RNA 48 kDa protein (424 aa).

The interval 51 to 83 (PRDGGGRKRKADGSQGRPSNNPGRPSRKWTEKT) is disordered.

The protein belongs to the nepovirus satellite RNA 48 kDa protein family.

In Tomato black ring virus (strain L) (TBRV), this protein is Satellite RNA 48 kDa protein.